Reading from the N-terminus, the 67-residue chain is MARITVEDCLEQIPNRFQLVLAATYRARMLSQGHTPRIETKNKPGVTALREIAEGKVGLEMLKKVPG.

The protein belongs to the RNA polymerase subunit omega family. As to quaternary structure, the RNAP catalytic core consists of 2 alpha, 1 beta, 1 beta' and 1 omega subunit. When a sigma factor is associated with the core the holoenzyme is formed, which can initiate transcription.

It catalyses the reaction RNA(n) + a ribonucleoside 5'-triphosphate = RNA(n+1) + diphosphate. Functionally, promotes RNA polymerase assembly. Latches the N- and C-terminal regions of the beta' subunit thereby facilitating its interaction with the beta and alpha subunits. This is DNA-directed RNA polymerase subunit omega from Delftia acidovorans (strain DSM 14801 / SPH-1).